We begin with the raw amino-acid sequence, 160 residues long: MAVKIKLTRLGKIRNPQYRVIVADARTRRDGRSIEVIGRYHPKEEPSLIDINSERTQYWLSVGAKPTEPVLKLLKITGDWQKFKGLPGAEGRLKVAPPKPSKLELFNAALAVADGGPTTEATRPKKKVSAKKAAKAVESDAEGAKATKAYALAEGDEQSE.

Residues 115–139 are disordered; it reads GGPTTEATRPKKKVSAKKAAKAVES. The segment covering 124–134 has biased composition (basic residues); that stretch reads PKKKVSAKKAA.

The protein belongs to the bacterial ribosomal protein bS16 family.

This is Small ribosomal subunit protein bS16 from Mycobacterium leprae (strain Br4923).